A 178-amino-acid chain; its full sequence is Ribosome maturation factor RimM (178 aa).

In terms of domain architecture, PRC barrel spans 93-170; it reads EGSYYYHELR…ALTADAPAGL (78 aa).

This sequence belongs to the RimM family. In terms of assembly, binds ribosomal protein uS19.

Its subcellular location is the cytoplasm. Functionally, an accessory protein needed during the final step in the assembly of 30S ribosomal subunit, possibly for assembly of the head region. Essential for efficient processing of 16S rRNA. May be needed both before and after RbfA during the maturation of 16S rRNA. It has affinity for free ribosomal 30S subunits but not for 70S ribosomes. In Deinococcus geothermalis (strain DSM 11300 / CIP 105573 / AG-3a), this protein is Ribosome maturation factor RimM.